The following is a 610-amino-acid chain: Aspercryptin biosynthesis cluster-specific transcription regulator atnN (610 aa).

A compositionally biased stretch (polar residues) spans 1-26 (MAPKDSQVSASNEMTGNPPSSVQGRS). The interval 1–27 (MAPKDSQVSASNEMTGNPPSSVQGRSR) is disordered. Positions 30–57 (CITCRIRRVKCDEERPHCRRCQSTGRKC) form a DNA-binding region, zn(2)-C6 fungal-type. Disordered stretches follow at residues 61–81 (TPLT…KAGS) and 427–493 (AGST…LPRP). 2 stretches are compositionally biased toward low complexity: residues 66 to 79 (QQPK…AAKA) and 437 to 474 (SRAG…TPTP).

The protein resides in the nucleus. Its function is as follows. Transcription factor that positively regulates the cluster that mediate the production of aspercryptins, linear lipopeptides built from six amino acids including 2 highly unusual and nonproteogenic amino acids, 2-amino-octanoic acid (2aoa) and 2-amino-dodecanol (2adol). In Emericella nidulans (strain FGSC A4 / ATCC 38163 / CBS 112.46 / NRRL 194 / M139) (Aspergillus nidulans), this protein is Aspercryptin biosynthesis cluster-specific transcription regulator atnN.